The chain runs to 325 residues: MKLFVHLSIFFSILFITLPSSYSCTENDKNALLQIKKALGNPPLLSSWNPRTDCCTGWTGVECTNRRVTGLSVTSGEVSGQISYQIGDLVDLRTLDFSYLPHLTGNIPRTITKLKNLNTLYLKHTSLSGPIPDYISELKSLTFLDLSFNQFTGPIPGSLSQMPKLEAIQINDNKLTGSIPNSFGSFVGNVPNLYLSNNKLSGKIPESLSKYDFNAVDLSGNGFEGDAFMFFGRNKTTVRVDLSRNMFNFDLVKVKFARSIVSLDLSQNHIYGKIPPALTKLHLEHFNVSDNHLCGKIPSGGLLQTFEPSAFAHNICLCGTPLKAC.

LRR repeat units follow at residues 65–88, 89–114, 115–140, 142–162, 163–185, 187–211, 213–233, 234–256, 257–280, and 281–305; these read NRRV…QIGD, LVDL…ITKL, KNLN…ELKS, TFLD…LSQM, PKLE…SFGS, VGNV…LSKY, FNAV…FFGR, NKTT…KVKF, ARSI…ALTK, and LHLE…LLQT.

It belongs to the polygalacturonase-inhibiting protein family. Interacts with MADS domain transcription factors during flower development. Component of a complex made of FLOR1, VSP1 and AGAMOUS (AG). Binds directly with AG. Confined to flowers and inflorescences (e.g. inflorescence meristems, floral meristems, stamens and carpels).

The protein resides in the cytoplasm. The protein localises to the nucleus. It localises to the perinuclear region. It is found in the cell membrane. In terms of biological role, promotes flowering transition in long days (LD). This chain is Leucine-rich repeat protein FLOR 1, found in Arabidopsis thaliana (Mouse-ear cress).